A 467-amino-acid polypeptide reads, in one-letter code: UDP-N-acetylmuramoylalanine--D-glutamate ligase (467 aa).

ATP is bound at residue 121-127; that stretch reads GTNGKST.

This sequence belongs to the MurCDEF family.

It localises to the cytoplasm. It catalyses the reaction UDP-N-acetyl-alpha-D-muramoyl-L-alanine + D-glutamate + ATP = UDP-N-acetyl-alpha-D-muramoyl-L-alanyl-D-glutamate + ADP + phosphate + H(+). The protein operates within cell wall biogenesis; peptidoglycan biosynthesis. In terms of biological role, cell wall formation. Catalyzes the addition of glutamate to the nucleotide precursor UDP-N-acetylmuramoyl-L-alanine (UMA). The polypeptide is UDP-N-acetylmuramoylalanine--D-glutamate ligase (Chelativorans sp. (strain BNC1)).